The following is an 88-amino-acid chain: Small ribosomal subunit protein uS17 (88 aa).

This sequence belongs to the universal ribosomal protein uS17 family. Part of the 30S ribosomal subunit.

One of the primary rRNA binding proteins, it binds specifically to the 5'-end of 16S ribosomal RNA. The polypeptide is Small ribosomal subunit protein uS17 (Prochlorococcus marinus (strain SARG / CCMP1375 / SS120)).